A 614-amino-acid chain; its full sequence is Glutamyl-tRNA(Gln) amidotransferase subunit E (614 aa).

Belongs to the GatB/GatE family. GatE subfamily. In terms of assembly, heterodimer of GatD and GatE.

It catalyses the reaction L-glutamyl-tRNA(Gln) + L-glutamine + ATP + H2O = L-glutaminyl-tRNA(Gln) + L-glutamate + ADP + phosphate + H(+). In terms of biological role, allows the formation of correctly charged Gln-tRNA(Gln) through the transamidation of misacylated Glu-tRNA(Gln) in organisms which lack glutaminyl-tRNA synthetase. The reaction takes place in the presence of glutamine and ATP through an activated gamma-phospho-Glu-tRNA(Gln). The GatDE system is specific for glutamate and does not act on aspartate. In Methanospirillum hungatei JF-1 (strain ATCC 27890 / DSM 864 / NBRC 100397 / JF-1), this protein is Glutamyl-tRNA(Gln) amidotransferase subunit E.